A 213-amino-acid polypeptide reads, in one-letter code: Sclerostin (213 aa).

Residues 1 to 23 (MQLPLALCLVCLLVHAAFRVVEG) form the signal peptide. Positions 41–71 (GEYPEPPPELENNKTMNRAENGGRPPHHPFE) are disordered. N-linked (GlcNAc...) asparagine glycosylation occurs at asparagine 53. Disulfide bonds link cysteine 80-cysteine 134, cysteine 94-cysteine 148, cysteine 105-cysteine 165, and cysteine 109-cysteine 167. The CTCK domain maps to 82–172 (ELHFTRYVTD…ASCKCKRLTR (91 aa)). Asparagine 175 carries an N-linked (GlcNAc...) asparagine glycan. Residues 178–213 (ELKDFGPEAARPQKGRKPRPRARGAKANQAELENAY) are disordered. Over residues 190-201 (QKGRKPRPRARG) the composition is skewed to basic residues.

This sequence belongs to the sclerostin family. Interacts with LRP4 (via the extracellular domain); the interaction facilitates the inhibition of Wnt signaling. Interacts with LRP5 (via the first two YWTD-EGF repeat domains); the interaction inhibits Wnt-mediated signaling. Interacts with LRP6.

It is found in the secreted. The protein resides in the extracellular space. The protein localises to the extracellular matrix. In terms of biological role, negative regulator of bone growth that acts through inhibition of Wnt signaling and bone formation. The polypeptide is Sclerostin (Chlorocebus aethiops (Green monkey)).